The primary structure comprises 235 residues: MTVLAPAWSPTTYLLLLLLLSSGLSGTQDCSFQHSPISSDFAVKIRELSDYLLQDYPVTVASNLQDEELCGGLWRLVLAQRWMERLKTVAGSKMQGLLERVNTEIHFVTKCAFQPPPSCLRFVQTNISRLLQETSEQLVALKPWITRQNFSRCLELQCQPDSSTLPPPWSPRPLEATAPTAPQPPLLLLLLLPVGLLLLAAAWCLHWQRTRRRTPRPGEQVPPVPSPQDLLLVEH.

The signal sequence occupies residues 1-26 (MTVLAPAWSPTTYLLLLLLLSSGLSG). Over 27–184 (TQDCSFQHSP…EATAPTAPQP (158 aa)) the chain is Extracellular. Intrachain disulfides connect cysteine 30/cysteine 111, cysteine 70/cysteine 153, and cysteine 119/cysteine 158. 2 N-linked (GlcNAc...) asparagine glycosylation sites follow: asparagine 126 and asparagine 149. The helical transmembrane segment at 185 to 205 (PLLLLLLLPVGLLLLAAAWCL) threads the bilayer. The Cytoplasmic portion of the chain corresponds to 206 to 235 (HWQRTRRRTPRPGEQVPPVPSPQDLLLVEH). Residues 213–235 (RTPRPGEQVPPVPSPQDLLLVEH) form a disordered region.

In terms of assembly, homodimer (isoform 2).

The protein localises to the cell membrane. Its subcellular location is the secreted. Functionally, stimulates the proliferation of early hematopoietic cells by activating FLT3. Synergizes well with a number of other colony stimulating factors and interleukins. Required for the development of B cells, and dendritic cells (DCs). The sequence is that of Fms-related tyrosine kinase 3 ligand (FLT3LG) from Homo sapiens (Human).